Reading from the N-terminus, the 323-residue chain is MIDFGNFYAQIAHGPLSKWLEVLPAQLAAWQRDSLHGYFRDWNNAVERLPALTPHRLDLLHGVCAGAETPLSEGQRIGIEKMLRTLMPWRKGPFELYGIQIDTEWRSDWKWQRILPHLSPLAGRTILDVGCGSGYHLWRMVGAGAHLAVGIDPMQLFLCQFEAVRKLLGGDSRAHLLPLGIEQLPALAAFDTVFSMGVLYHRRSPLDHLYQLKNQLVSGGELLLETLVIEGDEQQALIPGERYAQMRNVYFIPSAAMLIRWLEKCGFCDVRLVDQCPTSVEEQRRTDWMTSESLADFLDPADVRKTLEGYPAPLRAAFIARKP.

Carboxy-S-adenosyl-L-methionine contacts are provided by residues Lys-91, Trp-105, Lys-110, Gly-130, 181 to 182 (IE), Met-196, Tyr-200, and Arg-315.

This sequence belongs to the class I-like SAM-binding methyltransferase superfamily. CmoB family. In terms of assembly, homotetramer.

The enzyme catalyses carboxy-S-adenosyl-L-methionine + 5-hydroxyuridine(34) in tRNA = 5-carboxymethoxyuridine(34) in tRNA + S-adenosyl-L-homocysteine + H(+). In terms of biological role, catalyzes carboxymethyl transfer from carboxy-S-adenosyl-L-methionine (Cx-SAM) to 5-hydroxyuridine (ho5U) to form 5-carboxymethoxyuridine (cmo5U) at position 34 in tRNAs. In Edwardsiella ictaluri (strain 93-146), this protein is tRNA U34 carboxymethyltransferase.